The sequence spans 175 residues: Gamma-crystallin-1 (175 aa).

Beta/gamma crystallin 'Greek key' domains are found at residues 2-40 (GKIF…RVEG) and 41-83 (GNWI…RFLP). Residues 84 to 88 (NYQGQ) form a connecting peptide region. Beta/gamma crystallin 'Greek key' domains follow at residues 89–129 (YKMR…NVFD) and 130–172 (GHWM…RRVY).

Belongs to the beta/gamma-crystallin family. Monomer.

Functionally, crystallins are the dominant structural components of the vertebrate eye lens. The chain is Gamma-crystallin-1 (cryg1) from Xenopus laevis (African clawed frog).